Consider the following 577-residue polypeptide: E3 ubiquitin protein ligase RIN3 (577 aa).

6 helical membrane passes run 3–23, 58–78, 120–140, 162–182, 191–211, and 272–292; these read ITYLHISVATTALSFVGLQVW, TTIALLASFVLNIYILLVLSL, GVLWTIWLTVLCTLKMFQALA, YSALFMVLSTDLCWIKLSLMI, YLLLLFEPCGIAFETLQALLI, and YLHIWWLHGMAFHLVDAVLFL. An RING-type; atypical zinc finger spans residues 337-379; the sequence is CAICREPMAKAKRLHCNHLFHLGCLRSWLDQGLNEVYSCPTCR. The region spanning 537–577 is the CUE domain; the sequence is SILAMAETVREVLPHVPDEIIFQDLQRTNSVSVTVNNLLQM.

Interacts (via C-terminus) with RPM1 (via N-terminus).

The protein localises to the membrane. The catalysed reaction is S-ubiquitinyl-[E2 ubiquitin-conjugating enzyme]-L-cysteine + [acceptor protein]-L-lysine = [E2 ubiquitin-conjugating enzyme]-L-cysteine + N(6)-ubiquitinyl-[acceptor protein]-L-lysine.. The protein operates within protein modification; protein ubiquitination. Functionally, E3 ubiquitin protein ligase that acts as a positive regulator of RPM1- and RPS2-dependent hypersensitive response (HR), in association with RIN2. Probably not required for RPM1 degradation during HR. The chain is E3 ubiquitin protein ligase RIN3 (RIN3) from Arabidopsis thaliana (Mouse-ear cress).